Reading from the N-terminus, the 391-residue chain is S-adenosylmethionine synthase (391 aa).

H14 is an ATP binding site. D16 contributes to the Mg(2+) binding site. E42 serves as a coordination point for K(+). The L-methionine site is built by E55 and Q98. Residues 98–108 (QSADIAMGVDE) are flexible loop. ATP contacts are provided by residues 172-174 (DGK), 238-239 (RF), D247, 253-254 (RK), A270, and K274. Residue D247 coordinates L-methionine. Position 278 (K278) interacts with L-methionine.

The protein belongs to the AdoMet synthase family. As to quaternary structure, homotetramer; dimer of dimers. It depends on Mg(2+) as a cofactor. The cofactor is K(+).

It is found in the cytoplasm. The catalysed reaction is L-methionine + ATP + H2O = S-adenosyl-L-methionine + phosphate + diphosphate. It functions in the pathway amino-acid biosynthesis; S-adenosyl-L-methionine biosynthesis; S-adenosyl-L-methionine from L-methionine: step 1/1. In terms of biological role, catalyzes the formation of S-adenosylmethionine (AdoMet) from methionine and ATP. The overall synthetic reaction is composed of two sequential steps, AdoMet formation and the subsequent tripolyphosphate hydrolysis which occurs prior to release of AdoMet from the enzyme. This chain is S-adenosylmethionine synthase, found in Clostridium acetobutylicum (strain ATCC 824 / DSM 792 / JCM 1419 / IAM 19013 / LMG 5710 / NBRC 13948 / NRRL B-527 / VKM B-1787 / 2291 / W).